A 68-amino-acid polypeptide reads, in one-letter code: Large ribosomal subunit protein bL35 (68 aa).

The protein belongs to the bacterial ribosomal protein bL35 family.

This Wolbachia pipientis wMel protein is Large ribosomal subunit protein bL35.